The chain runs to 1183 residues: DNA-directed RNA polymerase subunit beta' (1183 aa).

The Zn(2+) site is built by Cys60, Cys62, Cys75, and Cys78. Mg(2+) contacts are provided by Asp449, Asp451, and Asp453. 4 residues coordinate Zn(2+): Cys794, Cys867, Cys874, and Cys877.

It belongs to the RNA polymerase beta' chain family. In terms of assembly, the RNAP catalytic core consists of 2 alpha, 1 beta, 1 beta' and 1 omega subunit. When a sigma factor is associated with the core the holoenzyme is formed, which can initiate transcription. It depends on Mg(2+) as a cofactor. Zn(2+) serves as cofactor.

The catalysed reaction is RNA(n) + a ribonucleoside 5'-triphosphate = RNA(n+1) + diphosphate. In terms of biological role, DNA-dependent RNA polymerase catalyzes the transcription of DNA into RNA using the four ribonucleoside triphosphates as substrates. The polypeptide is DNA-directed RNA polymerase subunit beta' (Caldanaerobacter subterraneus subsp. tengcongensis (strain DSM 15242 / JCM 11007 / NBRC 100824 / MB4) (Thermoanaerobacter tengcongensis)).